Consider the following 739-residue polypeptide: MICOS complex subunit Mic60 (739 aa).

Residues 23–63 are disordered; that stretch reads ANNRQFGGSSSGSGGREQGRRQQEEQGQQGDQGYQGYQSLP. Over residues 47-61 the composition is skewed to low complexity; that stretch reads EQGQQGDQGYQGYQS. A helical transmembrane segment spans residues 69-89; that stretch reads AGFGKVVLFVSPLAAVGGVIT. The tract at residues 154 to 219 is disordered; sequence VTGLFGGGSG…PAAKPKDNPL (66 aa). Basic and acidic residues predominate over residues 163–198; it reads GDDKSKKSKVEPVKATPAEEKRPSKPSEVSKTEAKP. Residues 199 to 212 are compositionally biased toward low complexity; the sequence is VSKPAAAAAPAPAA. Residues 283–339 are a coiled coil; sequence TAVATAERAAREAQEKIVACEIALSAAATAQNAKKVEAVRDKIKKLVDHIGNVKDEL.

This sequence belongs to the MICOS complex subunit Mic60 family. Component of the mitochondrial contact site and cristae organizing system (MICOS) complex. Interacts with the mitochondria-shaping protein Opa1.

It localises to the mitochondrion inner membrane. Its function is as follows. Component of the MICOS complex, a large protein complex of the mitochondrial inner membrane that plays crucial roles in the maintenance of crista junctions, inner membrane architecture, and formation of contact sites to the outer membrane. In Drosophila melanogaster (Fruit fly), this protein is MICOS complex subunit Mic60.